We begin with the raw amino-acid sequence, 479 residues long: Poly(A) polymerase catalytic subunit (479 aa).

Catalysis depends on residues Asp202 and Asp204. Ca(2+) contacts are provided by Asp202, Asp204, and Asp253.

It belongs to the poxviridae poly(A) polymerase catalytic subunit family. In terms of assembly, heterodimer of a large (catalytic) subunit and a small (regulatory) subunit.

It catalyses the reaction RNA(n) + ATP = RNA(n)-3'-adenine ribonucleotide + diphosphate. Functionally, polymerase that creates the 3'-poly(A) tail of mRNA's. The protein is Poly(A) polymerase catalytic subunit (OPG063) of Homo sapiens (Human).